The sequence spans 90 residues: Accessory gland-specific peptide 26Ab (90 aa).

Positions 1–21 (MNYFAVLCIFSCICLWQFSDA) are cleaved as a signal peptide.

In terms of tissue distribution, main cells of the accessory glands of males.

Its subcellular location is the secreted. The protein localises to the extracellular space. In terms of biological role, this protein is transferred from male to female during mating and may affect egglaying and behavior after mating. In Drosophila mauritiana (Fruit fly), this protein is Accessory gland-specific peptide 26Ab (Acp26Ab).